The sequence spans 505 residues: Calcium/calmodulin-dependent protein kinase kinase 1 (505 aa).

The disordered stretch occupies residues 27–66 (HLEEAEEGPEPASNGVDPPPRARAASVIPGSASRPTPVRP). Phosphoserine occurs at positions 67 and 74. Arg78 carries the post-translational modification Asymmetric dimethylarginine. Ser100 is subject to Phosphoserine. Thr108 is subject to Phosphothreonine. The Protein kinase domain maps to 128 to 409 (YKLQSEIGKG…VSDIKLHPWV (282 aa)). Residues 134–142 (IGKGAYGVV) and Lys157 contribute to the ATP site. An RP domain region spans residues 167–189 (QYGFPRRPPPRGSQAPQGGPAKQ). The active-site Proton acceptor is Asp275. Residues 435-440 (KNSVKL) are autoinhibitory domain. The interval 438-463 (VKLIPSWTTVILVKSMLRKRSFGNPF) is calmodulin-binding. 3 positions are modified to phosphoserine: Ser458, Ser475, and Ser492. The interval 460–505 (GNPFEPQARREERSMSAPGNLLLKEGCGEGGKSPELPGVQEDEAAS) is disordered.

It belongs to the protein kinase superfamily. Ser/Thr protein kinase family. As to quaternary structure, interacts with CAMK4 and calmodulin. Appears to be autophosphorylated. Phosphorylated at multiple sites by PRCAKA/PKA. Phosphorylation of Ser-458 is blocked upon binding to Ca(2+)/calmodulin. May be phosphorylated by CAMK1 and CAMK4. Mostly expressed in the brain with higher levels in cortex and hippocampus. Lower expression levels were detected in striatum, nucleus accumbens and cerebellum (at protein level). Abundant in forebrain, weaker in cerebellum and also detected in thymus and spleen.

It localises to the cytoplasm. The protein resides in the nucleus. The enzyme catalyses L-seryl-[protein] + ATP = O-phospho-L-seryl-[protein] + ADP + H(+). It catalyses the reaction L-threonyl-[protein] + ATP = O-phospho-L-threonyl-[protein] + ADP + H(+). With respect to regulation, activated by Ca(2+)/calmodulin. Binding of calmodulin may relieve intrasteric autoinhibition. Partially inhibited upon phosphorylation by PRCAKA/PKA. May be regulated through phosphorylation by CAMK1 and CAMK4. Functionally, calcium/calmodulin-dependent protein kinase that belongs to a proposed calcium-triggered signaling cascade involved in a number of cellular processes. Phosphorylates CAMK1, CAMK1D, CAMK1G and CAMK4. Involved in regulating cell apoptosis. Promotes cell survival by phosphorylating AKT1/PKB that inhibits pro-apoptotic BAD/Bcl2-antagonist of cell death. The polypeptide is Calcium/calmodulin-dependent protein kinase kinase 1 (Camkk1) (Rattus norvegicus (Rat)).